The chain runs to 66 residues: ATP synthase F(0) complex subunit 8 (66 aa).

Methionine 1 carries the post-translational modification N-formylmethionine. The helical transmembrane segment at 8–24 threads the bilayer; the sequence is TWLTMILSMFLTLFIIF. Position 54 is an N6-acetyllysine; alternate (lysine 54). Lysine 54 is subject to N6-succinyllysine; alternate. Lysine 57 carries the post-translational modification N6-acetyllysine.

Belongs to the ATPase protein 8 family. Component of the ATP synthase complex composed at least of ATP5F1A/subunit alpha, ATP5F1B/subunit beta, ATP5MC1/subunit c (homooctomer), MT-ATP6/subunit a, MT-ATP8/subunit 8, ATP5ME/subunit e, ATP5MF/subunit f, ATP5MG/subunit g, ATP5MK/subunit k, ATP5MJ/subunit j, ATP5F1C/subunit gamma, ATP5F1D/subunit delta, ATP5F1E/subunit epsilon, ATP5PF/subunit F6, ATP5PB/subunit b, ATP5PD/subunit d, ATP5PO/subunit OSCP. ATP synthase complex consists of a soluble F(1) head domain (subunits alpha(3) and beta(3)) - the catalytic core - and a membrane F(0) domain - the membrane proton channel (subunits c, a, 8, e, f, g, k and j). These two domains are linked by a central stalk (subunits gamma, delta, and epsilon) rotating inside the F1 region and a stationary peripheral stalk (subunits F6, b, d, and OSCP). Interacts with PRICKLE3.

It localises to the mitochondrion membrane. Its function is as follows. Subunit 8, of the mitochondrial membrane ATP synthase complex (F(1)F(0) ATP synthase or Complex V) that produces ATP from ADP in the presence of a proton gradient across the membrane which is generated by electron transport complexes of the respiratory chain. ATP synthase complex consist of a soluble F(1) head domain - the catalytic core - and a membrane F(1) domain - the membrane proton channel. These two domains are linked by a central stalk rotating inside the F(1) region and a stationary peripheral stalk. During catalysis, ATP synthesis in the catalytic domain of F(1) is coupled via a rotary mechanism of the central stalk subunits to proton translocation. In vivo, can only synthesize ATP although its ATP hydrolase activity can be activated artificially in vitro. Part of the complex F(0) domain. This is ATP synthase F(0) complex subunit 8 from Bos taurus (Bovine).